Reading from the N-terminus, the 62-residue chain is LKCHNTQLPFIYKTCPEGKNLCFKATLKKFPLKFPFKRGCADNCPKNSALLKYVCCSTDKCN.

Cystine bridges form between Cys3–Cys22, Cys15–Cys40, Cys44–Cys55, and Cys56–Cys61.

The protein belongs to the three-finger toxin family. Short-chain subfamily. Orphan group XV sub-subfamily. As to expression, expressed by the venom gland.

The protein localises to the secreted. Functionally, potent inhibitor of human Nav1.8/SCN10A (IC(50)=141-380 nM). Is highly selective for this channel and acts in a reversible manner. Shows a depolarizing shift of activation and hyperpolarizing shift of inactivation. In contrast to the very similar cytotoxin A5 (AC P62375), does not seem to bind integrin alpha-V/beta-3, since it does not promote or inhibit the proliferation of HUVECs and C-PAE cells. In vivo, in rodent models of inflammatory and neuropathic pain, it alleviates nociceptive behaviors more potently than does morphine. It displays no evident cytotoxic, hemolytic and cardiotoxic activities and produces no obvious adverse responses in mice even at a dose 30-fold higher than that producing a significant analgesic effect. The sequence is that of Mu-elapitoxin-Na1a from Naja atra (Chinese cobra).